The sequence spans 473 residues: Sun domain-containing protein 1 (473 aa).

The segment at 1 to 47 is disordered; it reads MALRHTISPQFSNRHSPPVTRSVSRTGVHQPLDTSTPVTRRDSQPGT. Positions 7–47 are enriched in polar residues; that stretch reads ISPQFSNRHSPPVTRSVSRTGVHQPLDTSTPVTRRDSQPGT. Coiled-coil stretches lie at residues 163–191 and 204–235; these read ISNL…LENV and EELK…STKI. Residues 237–257 are disordered; the sequence is HSTPEKAPETAPTASLPPSSQ. The segment covering 248–257 has biased composition (polar residues); the sequence is PTASLPPSSQ. Residues 262-282 traverse the membrane as a helical segment; the sequence is HITRRALLGVNVANSLIGASI. The SUN domain maps to 279–443; it reads GASIDHSCSS…YLIRVYGEPV (165 aa). The interval 443-473 is disordered; the sequence is VDPPKETQPMTDNGTESKLESAIVNSVSETA.

It is found in the nucleus membrane. The protein resides in the nucleus envelope. Involved in centrosome attachment to the nucleus. Required for zyg-12 localization to the nuclear envelope. Together with pot-1, it is required to anchor telomeres to the nuclear envelope in embryos. This is Sun domain-containing protein 1 from Caenorhabditis elegans.